The sequence spans 396 residues: Chalcone synthase B (396 aa).

Residue C170 is part of the active site.

The protein belongs to the thiolase-like superfamily. Chalcone/stilbene synthases family.

The enzyme catalyses (E)-4-coumaroyl-CoA + 3 malonyl-CoA + 3 H(+) = 2',4,4',6'-tetrahydroxychalcone + 3 CO2 + 4 CoA. It functions in the pathway secondary metabolite biosynthesis; flavonoid biosynthesis. In terms of biological role, the primary product of this enzyme is 4,2',4',6'-tetrahydroxychalcone (also termed naringenin-chalcone or chalcone) which can under specific conditions spontaneously isomerize into naringenin. This chain is Chalcone synthase B (CHSB), found in Ipomoea purpurea (Common morning glory).